We begin with the raw amino-acid sequence, 110 residues long: Pectin degradation protein KdgF (110 aa).

One can recognise a Cupin type-2 domain in the interval 35 to 94 (VHFAKGAIGTPHKHDIHDQIAYVAAGSFEVVIEGEKRILKTGDAYMAVKNEMHGVVSLEE).

It functions in the pathway glycan metabolism; pectin degradation. Functionally, may have a role in pathogenicity. This is Pectin degradation protein KdgF (kdgF) from Dickeya dadantii (strain 3937) (Erwinia chrysanthemi (strain 3937)).